The primary structure comprises 827 residues: MGKKKKKRKSSAFKIILNVFLSIFLVAGVAFGGIVFAMIKTAPPLNVQQVLTFDEPSILYDDKGQYMDKVITNEQRIVVDYKNVPQNLKNAFVSIEDERFYKHHGVDIKRFTGVILINVTNKIKRSSKLQGASTLTQQLIKNTVLSSEVSIKRKVQEMYLSIQLEKELSKDEILGAYMNSIFLGGNALGVEAASKQYFNKSVKDLSLIECAFIAGVPQSPSVYYPYSSASKKNPSIYLNRTKTVLYKMLDNGYITQNDYNKALKDLDSKKLAFAKPSAPSNKLAYEWFSIPAIEQVKKDLKTQYKYDDKQIHNLLVNGGLKIYTTMNKNLQDKTQNTINDAYYLNSYKSNGIIYPQASAVIMDYHNGEVKTIVGGRGDQPARSYNRAASYNYLRPAGSSIKPLTVYSAAIDSKKATAATGFEDSPIPNNIGRKYSSGAPYNPRNTPDIYYGYVNVREALMRSINVVAVKLVDKIGLNTSIQYAEKFGIPIDQHDRSSIASLSLGELHKGTNPLIMAQAYGVFGNNGTYTEAKLYTKVVDRTGKVLLEPKTNTKKVLSPEAAFITYDMLQGPVSESGTGPQANFGNMEVRGKTGTSSDMKNLWFCGLTPYYSAAVWIGNDNSSTVDGVYSSTAARLWGDIMKEFHVNLPYKQVQKPASVVTANVDRISGKLPTQLSYRDPRGSTVYNEFFINGTIPTEYDDIHVEAQINKLTGKLASKFTPSFLVESRVFLRRDYSPGVELLDQQWLLPYSIDEGGSLPPTEEKNNSNTRDKNKDKNKDKDKNKNKDKNPSQDKPNNNNNNNNNDNNNNTKPPENDSNQNHEDNKNKQ.

The Cytoplasmic segment spans residues 1-18; sequence MGKKKKKRKSSAFKIILN. A helical; Signal-anchor for type II membrane protein membrane pass occupies residues 19-39; sequence VFLSIFLVAGVAFGGIVFAMI. The Extracellular segment spans residues 40–827; sequence KTAPPLNVQQ…QNHEDNKNKQ (788 aa). The interval 57–229 is transglycosylase; it reads SILYDDKGQY…PSVYYPYSSA (173 aa). Residue E96 is the Proton donor; for transglycosylase activity of the active site. The interval 357–641 is transpeptidase; the sequence is ASAVIMDYHN…AARLWGDIMK (285 aa). S398 acts as the Acyl-ester intermediate; for transpeptidase activity in catalysis. Residues 755–827 form a disordered region; it reads GSLPPTEEKN…QNHEDNKNKQ (73 aa). Over residues 760–790 the composition is skewed to basic and acidic residues; that stretch reads TEEKNNSNTRDKNKDKNKDKDKNKNKDKNPS. Positions 791–817 are enriched in low complexity; the sequence is QDKPNNNNNNNNNDNNNNTKPPENDSN. Residues 818–827 show a composition bias toward basic and acidic residues; that stretch reads QNHEDNKNKQ.

This sequence in the N-terminal section; belongs to the glycosyltransferase 51 family. In the C-terminal section; belongs to the transpeptidase family.

The protein resides in the cell membrane. The enzyme catalyses [GlcNAc-(1-&gt;4)-Mur2Ac(oyl-L-Ala-gamma-D-Glu-L-Lys-D-Ala-D-Ala)](n)-di-trans,octa-cis-undecaprenyl diphosphate + beta-D-GlcNAc-(1-&gt;4)-Mur2Ac(oyl-L-Ala-gamma-D-Glu-L-Lys-D-Ala-D-Ala)-di-trans,octa-cis-undecaprenyl diphosphate = [GlcNAc-(1-&gt;4)-Mur2Ac(oyl-L-Ala-gamma-D-Glu-L-Lys-D-Ala-D-Ala)](n+1)-di-trans,octa-cis-undecaprenyl diphosphate + di-trans,octa-cis-undecaprenyl diphosphate + H(+). It catalyses the reaction Preferential cleavage: (Ac)2-L-Lys-D-Ala-|-D-Ala. Also transpeptidation of peptidyl-alanyl moieties that are N-acyl substituents of D-alanine.. The protein operates within cell wall biogenesis; peptidoglycan biosynthesis. Its function is as follows. Cell wall formation. Synthesis of cross-linked peptidoglycan from the lipid intermediates. The enzyme has a penicillin-insensitive transglycosylase N-terminal domain (formation of linear glycan strands) and a penicillin-sensitive transpeptidase C-terminal domain (cross-linking of the peptide subunits). In Clostridium botulinum (strain Langeland / NCTC 10281 / Type F), this protein is Penicillin-binding protein 1A (pbpA).